The sequence spans 198 residues: Anthranilate synthase component 2 (198 aa).

A Glutamine amidotransferase type-1 domain is found at 2-198 (LLMMIDNYDS…NFLKQTGGRR (197 aa)). 53–55 (GPC) contributes to the L-glutamine binding site. Catalysis depends on Cys80, which acts as the Nucleophile; for GATase activity. Residues Gln84 and 130–131 (SL) each bind L-glutamine. Active-site for GATase activity residues include His174 and Glu176.

In terms of assembly, heterotetramer consisting of two non-identical subunits: a beta subunit (TrpG) and a large alpha subunit (TrpE).

The enzyme catalyses chorismate + L-glutamine = anthranilate + pyruvate + L-glutamate + H(+). It functions in the pathway amino-acid biosynthesis; L-tryptophan biosynthesis; L-tryptophan from chorismate: step 1/5. Functionally, part of a heterotetrameric complex that catalyzes the two-step biosynthesis of anthranilate, an intermediate in the biosynthesis of L-tryptophan. In the first step, the glutamine-binding beta subunit (TrpG) of anthranilate synthase (AS) provides the glutamine amidotransferase activity which generates ammonia as a substrate that, along with chorismate, is used in the second step, catalyzed by the large alpha subunit of AS (TrpE) to produce anthranilate. In the absence of TrpG, TrpE can synthesize anthranilate directly from chorismate and high concentrations of ammonia. This Pseudomonas putida (Arthrobacter siderocapsulatus) protein is Anthranilate synthase component 2 (trpG).